Reading from the N-terminus, the 38-residue chain is Toxin Lqh 8/6 (38 aa).

4 disulfides stabilise this stretch: cysteine 2–cysteine 19, cysteine 5–cysteine 28, cysteine 16–cysteine 33, and cysteine 20–cysteine 35.

As to expression, expressed by the venom gland.

The protein localises to the secreted. Toxin with unknown function in healthy organisms. On glioma cells, interacts with chloride channels (probably ClC-3/CLCN3) and MMP2 at the surface of glioma cells. This complex is then internalized via caveolae, thus inhibiting the chloride channels necessary for cell shrinkage and tumor propagation. The polypeptide is Toxin Lqh 8/6 (Leiurus hebraeus (Hebrew deathstalker scorpion)).